We begin with the raw amino-acid sequence, 128 residues long: 3-aminoacrylate deaminase RutC (128 aa).

Belongs to the RutC family.

The catalysed reaction is (Z)-3-aminoacrylate + H2O + H(+) = 3-oxopropanoate + NH4(+). In terms of biological role, involved in pyrimidine catabolism. Catalyzes the deamination of 3-aminoacrylate to malonic semialdehyde, a reaction that can also occur spontaneously. RutC may facilitate the reaction and modulate the metabolic fitness, rather than catalyzing essential functions. The polypeptide is 3-aminoacrylate deaminase RutC (Azorhizobium caulinodans (strain ATCC 43989 / DSM 5975 / JCM 20966 / LMG 6465 / NBRC 14845 / NCIMB 13405 / ORS 571)).